The sequence spans 535 residues: Beta-hexosaminidase 3 (535 aa).

The N-terminal stretch at 1 to 24 (MRGSGAKIAGVLPLFMLFIAGTIS) is a signal peptide. Asparagine 92 carries N-linked (GlcNAc...) asparagine glycosylation. A disulfide bridge connects residues cysteine 292 and cysteine 334. Glutamate 329 acts as the Proton donor in catalysis. Residues asparagine 331, asparagine 405, asparagine 441, and asparagine 496 are each glycosylated (N-linked (GlcNAc...) asparagine). A disulfide bridge connects residues cysteine 506 and cysteine 532.

Belongs to the glycosyl hydrolase 20 family. In terms of processing, N-glycosylated. Expressed in roots, leaves, stems, flowers and siliques.

It is found in the cell membrane. The catalysed reaction is Hydrolysis of terminal non-reducing N-acetyl-D-hexosamine residues in N-acetyl-beta-D-hexosaminides.. Its activity is regulated as follows. Slightly inhibited by N-acetylcastanospermine. Its function is as follows. Has a broad substrate specificity. Can use synthetic substrates such as pyridylaminated chitotriose, p-nitrophenyl-beta-N-acetylglucosaminide, p-nitrophenyl-2-acetamido-2-deoxy-beta-D-glucopyranoside (pNP-GlcNAc), p-nitrophenyl-2-acetamido-2-deoxy-beta-D-galactopyranoside (pNP-GalNAc), 4-methylumbelliferyl-2-acetamido-2-deoxy-beta-D-glucopyranoside (MU-GlcNAc), and 4-methylumbelliferyl-6-sulfo-2-acetamido-2-deoxy-beta-D-glucopyranoside (MU-GlcNAc-6SO(4)) as substrates. Removes terminal GlcNAc residues from alpha1,3- and alpha1,6-mannosyl branches of biantennary N-glycans without any strict branch preference. Required for the presence of paucimannosidic N-glycans in glycoproteins of roots and leaves. This Arabidopsis thaliana (Mouse-ear cress) protein is Beta-hexosaminidase 3 (HEXO3).